Reading from the N-terminus, the 341-residue chain is Biotin synthase (341 aa).

The 220-residue stretch at 53–272 (NHVETASLLS…IAVARIMMPK (220 aa)) folds into the Radical SAM core domain. C68, C72, and C75 together coordinate [4Fe-4S] cluster. [2Fe-2S] cluster-binding residues include C112, C143, C203, and R276.

Belongs to the radical SAM superfamily. Biotin synthase family. In terms of assembly, homodimer. The cofactor is [4Fe-4S] cluster. Requires [2Fe-2S] cluster as cofactor.

The catalysed reaction is (4R,5S)-dethiobiotin + (sulfur carrier)-SH + 2 reduced [2Fe-2S]-[ferredoxin] + 2 S-adenosyl-L-methionine = (sulfur carrier)-H + biotin + 2 5'-deoxyadenosine + 2 L-methionine + 2 oxidized [2Fe-2S]-[ferredoxin]. It participates in cofactor biosynthesis; biotin biosynthesis; biotin from 7,8-diaminononanoate: step 2/2. Its function is as follows. Catalyzes the conversion of dethiobiotin (DTB) to biotin by the insertion of a sulfur atom into dethiobiotin via a radical-based mechanism. The polypeptide is Biotin synthase (Nitrobacter winogradskyi (strain ATCC 25391 / DSM 10237 / CIP 104748 / NCIMB 11846 / Nb-255)).